The chain runs to 314 residues: Acetyl-coenzyme A carboxylase carboxyl transferase subunit alpha (314 aa).

Residues Glu-32–Glu-289 form the CoA carboxyltransferase C-terminal domain.

The protein belongs to the AccA family. As to quaternary structure, acetyl-CoA carboxylase is a heterohexamer composed of biotin carboxyl carrier protein (AccB), biotin carboxylase (AccC) and two subunits each of ACCase subunit alpha (AccA) and ACCase subunit beta (AccD).

The protein localises to the cytoplasm. It carries out the reaction N(6)-carboxybiotinyl-L-lysyl-[protein] + acetyl-CoA = N(6)-biotinyl-L-lysyl-[protein] + malonyl-CoA. Its pathway is lipid metabolism; malonyl-CoA biosynthesis; malonyl-CoA from acetyl-CoA: step 1/1. Functionally, component of the acetyl coenzyme A carboxylase (ACC) complex. First, biotin carboxylase catalyzes the carboxylation of biotin on its carrier protein (BCCP) and then the CO(2) group is transferred by the carboxyltransferase to acetyl-CoA to form malonyl-CoA. The polypeptide is Acetyl-coenzyme A carboxylase carboxyl transferase subunit alpha (Staphylococcus epidermidis (strain ATCC 35984 / DSM 28319 / BCRC 17069 / CCUG 31568 / BM 3577 / RP62A)).